The sequence spans 228 residues: MSYSEKPEDITKEEWMDKLNNVHIQRADMNRLIMNYLVTEGFKEAAEKFRMESGIEPNVDLDSLDERIKIREMVLKGQIQEAIALINSLHPELLDTNRYLYFHLQQQHLIELIRLRETEAALEFAQSQLAEQGEESRECLTEMERTLALLAFDNPEESPFGDLLNMMQRQKVWSEVNQAVLDYENRESTPKLAKLLKLLLWAQNELDQKKVKYSRMTDLSKGTIEDPK.

A LisH domain is found at 25–57 (QRADMNRLIMNYLVTEGFKEAAEKFRMESGIEP). The CTLH domain maps to 63–120 (SLDERIKIREMVLKGQIQEAIALINSLHPELLDTNRYLYFHLQQQHLIELIRLRETEA).

This sequence belongs to the GID8 family. As to quaternary structure, identified in the CTLH complex that contains at least MAEA, RMND5A (or alternatively its paralog RMND5B), GID8, WDR26, and RANBP9 and/or RANBP10. Interacts with CTNNB1.

Its function is as follows. Core component of the CTLH E3 ubiquitin-protein ligase complex that selectively accepts ubiquitin from UBE2H and mediates ubiquitination and subsequent proteasomal degradation of target proteins. Acts as a positive regulator of Wnt signaling pathway by promoting beta-catenin (CTNNB1) nuclear accumulation. Required for normal Wnt signaling and normal dorsoventral patterning during embryogenesis. This is Glucose-induced degradation protein 8-A homolog (gid8a) from Danio rerio (Zebrafish).